A 296-amino-acid polypeptide reads, in one-letter code: Probable endonuclease 4 (296 aa).

Zn(2+) is bound by residues H68, H109, E144, D178, H181, H213, D226, H228, and E258.

The protein belongs to the AP endonuclease 2 family. Zn(2+) serves as cofactor.

It catalyses the reaction Endonucleolytic cleavage to 5'-phosphooligonucleotide end-products.. Its function is as follows. Endonuclease IV plays a role in DNA repair. It cleaves phosphodiester bonds at apurinic or apyrimidinic (AP) sites, generating a 3'-hydroxyl group and a 5'-terminal sugar phosphate. This Staphylococcus epidermidis (strain ATCC 35984 / DSM 28319 / BCRC 17069 / CCUG 31568 / BM 3577 / RP62A) protein is Probable endonuclease 4.